The following is a 212-amino-acid chain: uncharacterized protein (212 aa).

Glycine 53, glutamate 74, and aspartate 97 together coordinate S-adenosyl-L-methionine.

Belongs to the methyltransferase superfamily. YrrT family.

Could be a S-adenosyl-L-methionine-dependent methyltransferase. This is an uncharacterized protein from Bacillus cereus (strain ATCC 10987 / NRS 248).